The primary structure comprises 4076 residues: E3 ubiquitin-protein ligase TOM1-like (4076 aa).

The segment covering 225–237 (SSAAPAVSAGSTA) has biased composition (low complexity). Disordered regions lie at residues 225-256 (SSAA…KNVA), 288-360 (YPDT…RDGP), 748-819 (IPAE…ILPS), 921-970 (LEAP…NKPA), 1083-1103 (SPVQ…SSGT), 1571-1646 (MALD…ITRE), 1988-2041 (PADA…KRPI), 2067-2110 (NVPA…KLAK), 2275-2295 (EGDK…IGRS), 2356-2551 (SGTA…ELDY), 2581-2634 (GDDL…LLAP), 2782-2817 (IPIP…ESTH), 2858-2955 (EKAR…QAED), 3037-3066 (EQHE…ASIL), 3105-3132 (RQLH…GAGT), 3216-3241 (KQLK…NNNG), and 3353-3444 (EEQA…QLTP). Residues 238–250 (KAKDKEKEKEKAT) show a composition bias toward basic and acidic residues. The span at 311–320 (TTSSPAAPTP) shows a compositional bias: low complexity. Over residues 322 to 343 (RRSSTMNVSQSSRTQRVGSSEE) the composition is skewed to polar residues. Acidic residues predominate over residues 767–778 (EGNDADDDSEDD). A compositionally biased stretch (basic and acidic residues) spans 940–950 (VKGKGKEKATD). Over residues 959 to 969 (ASSSSSGNNKP) the composition is skewed to polar residues. Positions 1606–1620 (PGTSRETNVGASTTA) are enriched in polar residues. Residues 1621–1632 (PQQLPVLPSQQP) are compositionally biased toward low complexity. Residues 1633–1642 (ATESQSNTPR) show a composition bias toward polar residues. Positions 2021-2041 (VTDKDMHDAPKNPAQDLKRPI) are enriched in basic and acidic residues. A compositionally biased stretch (polar residues) spans 2086–2096 (NEATPSPSGDE). Residues 2099–2110 (SESKEKEKKLAK) show a composition bias toward basic and acidic residues. Acidic residues-rich tracts occupy residues 2378–2387 (DLTDDREETP) and 2405–2450 (EFSD…DLGE). A compositionally biased stretch (low complexity) spans 2460–2469 (QPGVVEVLMG). Acidic residues-rich tracts occupy residues 2470–2516 (ENDD…DLED) and 2523–2551 (EEGN…ELDY). A compositionally biased stretch (basic and acidic residues) spans 2587-2597 (EPIRDFDGHYI). Positions 2598-2622 (DDDEDGEEDDDEDEGEDDMDDDMYF) are enriched in acidic residues. Basic and acidic residues-rich tracts occupy residues 2788–2803 (HSRE…DTYQ) and 2858–2912 (EKAR…ERAE). Positions 2851–2929 (AIQAEKEEKA…QAAADQEANA (79 aa)) form a coiled coil. Residues 2913–2927 (AAAQAAAQAAADQEA) show a composition bias toward low complexity. Residues 3037–3047 (EQHEQRRRERQ) are compositionally biased toward basic and acidic residues. Positions 3108–3117 (HAQQGGQAAS) are enriched in polar residues. The stretch at 3341–3375 (PLQAIERRRKEAEEQAKKKKEAEEKAATEREAANA) forms a coiled coil. Positions 3353–3372 (EEQAKKKKEAEEKAATEREA) are enriched in basic and acidic residues. The segment covering 3373–3414 (ANAPEEQASTSTEQTPAQQEATQQPSESTPAAASGQQPAQQD) has biased composition (low complexity). Basic and acidic residues predominate over residues 3415–3439 (QENKELEAPKEKADEKDVQSDEKKI). The HECT domain maps to 3740–4076 (KADELKFGKL…TAGSDYFGFA (337 aa)). The active-site Glycyl thioester intermediate is cysteine 4043.

This sequence belongs to the UPL family. TOM1/PTR1 subfamily.

It localises to the nucleus. The catalysed reaction is S-ubiquitinyl-[E2 ubiquitin-conjugating enzyme]-L-cysteine + [acceptor protein]-L-lysine = [E2 ubiquitin-conjugating enzyme]-L-cysteine + N(6)-ubiquitinyl-[acceptor protein]-L-lysine.. It participates in protein modification; protein ubiquitination. Its function is as follows. Probable ubiquitin ligase protein, which may be involved in mRNA export. E3 ubiquitin ligase proteins mediate ubiquitination and subsequent proteasomal degradation of target proteins. Participates in mRNA export from the nucleus by regulating the transport of hnRNP proteins. This Neurospora crassa (strain ATCC 24698 / 74-OR23-1A / CBS 708.71 / DSM 1257 / FGSC 987) protein is E3 ubiquitin-protein ligase TOM1-like.